Reading from the N-terminus, the 465-residue chain is Methionine aminopeptidase 2-2 (465 aa).

The span at 1-13 shows a compositional bias: basic and acidic residues; the sequence is MGSKTPNDHRRGP. The interval 1–92 is disordered; that stretch reads MGSKTPNDHR…KKKTLLGGLQ (92 aa). The span at 44 to 55 shows a compositional bias: acidic residues; sequence GETEDGEDEDDD. Positions 71 to 86 are enriched in basic residues; the sequence is TKKKNKRKKNKKKKKT. Position 217 (histidine 217) interacts with substrate. The a divalent metal cation site is built by aspartate 238, aspartate 249, and histidine 318. Histidine 326 contributes to the substrate binding site. The a divalent metal cation site is built by glutamate 351 and glutamate 446.

This sequence belongs to the peptidase M24A family. Methionine aminopeptidase eukaryotic type 2 subfamily. Co(2+) serves as cofactor. Zn(2+) is required as a cofactor. Requires Mn(2+) as cofactor. The cofactor is Fe(2+).

It localises to the cytoplasm. It catalyses the reaction Release of N-terminal amino acids, preferentially methionine, from peptides and arylamides.. Cotranslationally removes the N-terminal methionine from nascent proteins. The N-terminal methionine is often cleaved when the second residue in the primary sequence is small and uncharged (Met-Ala-, Cys, Gly, Pro, Ser, Thr, or Val). The sequence is that of Methionine aminopeptidase 2-2 from Ajellomyces dermatitidis (strain ER-3 / ATCC MYA-2586) (Blastomyces dermatitidis).